Consider the following 368-residue polypeptide: 3-dehydroquinate synthase (368 aa).

NAD(+)-binding positions include 76-81 (DGEQYK), 110-114 (GVIGD), 134-135 (TT), K147, K156, and 174-177 (CLKT). Residues E189, H252, and H269 each coordinate Zn(2+).

It belongs to the sugar phosphate cyclases superfamily. Dehydroquinate synthase family. NAD(+) serves as cofactor. Requires Co(2+) as cofactor. Zn(2+) is required as a cofactor.

The protein localises to the cytoplasm. The catalysed reaction is 7-phospho-2-dehydro-3-deoxy-D-arabino-heptonate = 3-dehydroquinate + phosphate. It participates in metabolic intermediate biosynthesis; chorismate biosynthesis; chorismate from D-erythrose 4-phosphate and phosphoenolpyruvate: step 2/7. Catalyzes the conversion of 3-deoxy-D-arabino-heptulosonate 7-phosphate (DAHP) to dehydroquinate (DHQ). In Vibrio vulnificus (strain YJ016), this protein is 3-dehydroquinate synthase.